Reading from the N-terminus, the 85-residue chain is Small ribosomal subunit protein bS16 (85 aa).

The protein belongs to the bacterial ribosomal protein bS16 family.

The chain is Small ribosomal subunit protein bS16 from Buchnera aphidicola subsp. Schizaphis graminum (strain Sg).